The following is a 277-amino-acid chain: tRNA (guanine-N(7)-)-methyltransferase (277 aa).

The disordered stretch occupies residues 1–37; that stretch reads MAGTETGDAAGTEAPQPQKRYYRQRAHSNPMADHTLR. Residue Ser28 is modified to Phosphoserine. Residues Gly85, Glu108, Arg110, Asn141, Ala142, and Leu161 each contribute to the S-adenosyl-L-methionine site. Residue Asp164 is part of the active site. Residues 165–173 are alphaC helix; it reads PHFKRTKHK. S-adenosyl-L-methionine is bound by residues Thr239 and Glu241. The interval 239–247 is alpha6 helix; it reads TEEGKKVLR.

The protein belongs to the class I-like SAM-binding methyltransferase superfamily. TrmB family. Catalytic component of the METTL1-WDR4 complex, composed of METTL1 and WDR4. Phosphorylation at Ser-28 by PKB/AKT1 inactivates its methyltransferase activity via a steric interference mechanism in the active site that locally disrupts the catalytic center. Phosphorylation at Ser-28 does not affect the interaction with WDR4.

The protein localises to the nucleus. It carries out the reaction guanosine(46) in tRNA + S-adenosyl-L-methionine = N(7)-methylguanosine(46) in tRNA + S-adenosyl-L-homocysteine. The enzyme catalyses a guanosine in mRNA + S-adenosyl-L-methionine = an N(7)-methylguanosine in mRNA + S-adenosyl-L-homocysteine. The catalysed reaction is a guanosine in miRNA + S-adenosyl-L-methionine = an N(7)-methylguanosine in miRNA + S-adenosyl-L-homocysteine. Its pathway is tRNA modification; N(7)-methylguanine-tRNA biosynthesis. Functionally, catalytic component of METTL1-WDR4 methyltransferase complex that mediates the formation of N(7)-methylguanine in a subset of RNA species, such as tRNAs, mRNAs and microRNAs (miRNAs). Catalyzes the formation of N(7)-methylguanine at position 46 (m7G46) in a large subset of tRNAs that contain the 5'-RAGGU-3' motif within the variable loop. M7G46 interacts with C13-G22 in the D-loop to stabilize tRNA tertiary structure and protect tRNAs from decay. Also acts as a methyltransferase for a subset of internal N(7)-methylguanine in mRNAs. Internal N(7)-methylguanine methylation of mRNAs in response to stress promotes their relocalization to stress granules, thereby suppressing their translation. Also methylates a specific subset of miRNAs, such as let-7. N(7)-methylguanine methylation of let-7 miRNA promotes let-7 miRNA processing by disrupting an inhibitory secondary structure within the primary miRNA transcript (pri-miRNA). Acts as a regulator of embryonic stem cell self-renewal and differentiation. The protein is tRNA (guanine-N(7)-)-methyltransferase of Bos taurus (Bovine).